Reading from the N-terminus, the 149-residue chain is Arginine repressor (149 aa).

Belongs to the ArgR family.

The protein localises to the cytoplasm. Its pathway is amino-acid biosynthesis; L-arginine biosynthesis [regulation]. In terms of biological role, regulates arginine biosynthesis genes. The protein is Arginine repressor of Alkaliphilus oremlandii (strain OhILAs) (Clostridium oremlandii (strain OhILAs)).